A 611-amino-acid chain; its full sequence is Cilia- and flagella-associated protein 100 (611 aa).

The segment covering 1 to 17 (MSEIPSTIVSKNMTNDK) has biased composition (polar residues). Residues 1-57 (MSEIPSTIVSKNMTNDKNSLESMNISSSSSTEENPKKQARKNEEHGPDPSANPFHLS) form a disordered region. Low complexity predominate over residues 20-32 (LESMNISSSSSTE). Over residues 33–47 (ENPKKQARKNEEHGP) the composition is skewed to basic and acidic residues. Coiled-coil stretches lie at residues 101-128 (SLRRQLQLEDKQEDLEARAEAEHQRAFR), 164-203 (ALDVKRREIQRLETLATKEEARLERAEKSLEKDAALFDEF), and 230-257 (LEIRDLTTQIVNIKSEISRFEDTLKHYK). Disordered regions lie at residues 287–323 (EVSEASKESSVNSTPGDKGPGIKGKASSMWAKEGQGT) and 338–380 (SPSY…GEEP). Over residues 338–357 (SPSYLSSPQQGSQPSESSGG) the composition is skewed to low complexity. Coiled-coil stretches lie at residues 393 to 432 (VFRELEEQNLSLIQNSQETEKTLEELSHTLKHTQIRMDRE) and 526 to 578 (QVKI…RGRT).

It belongs to the CFAP100 family.

The protein localises to the cytoplasm. It is found in the cytoskeleton. Its subcellular location is the cilium axoneme. Functionally, may play a role in ciliary/flagellar motility by regulating the assembly and the activity of axonemal inner dynein arm. The polypeptide is Cilia- and flagella-associated protein 100 (Homo sapiens (Human)).